Reading from the N-terminus, the 547-residue chain is Glucose-6-phosphate isomerase 1 (547 aa).

Glutamate 353 acts as the Proton donor in catalysis. Active-site residues include histidine 384 and lysine 512.

It belongs to the GPI family.

It localises to the cytoplasm. It carries out the reaction alpha-D-glucose 6-phosphate = beta-D-fructose 6-phosphate. Its pathway is carbohydrate biosynthesis; gluconeogenesis. It functions in the pathway carbohydrate degradation; glycolysis; D-glyceraldehyde 3-phosphate and glycerone phosphate from D-glucose: step 2/4. Its function is as follows. Catalyzes the reversible isomerization of glucose-6-phosphate to fructose-6-phosphate. This chain is Glucose-6-phosphate isomerase 1, found in Chromobacterium violaceum (strain ATCC 12472 / DSM 30191 / JCM 1249 / CCUG 213 / NBRC 12614 / NCIMB 9131 / NCTC 9757 / MK).